The chain runs to 156 residues: Small ribosomal subunit protein uS7 (156 aa).

Belongs to the universal ribosomal protein uS7 family. Part of the 30S ribosomal subunit. Contacts proteins S9 and S11.

In terms of biological role, one of the primary rRNA binding proteins, it binds directly to 16S rRNA where it nucleates assembly of the head domain of the 30S subunit. Is located at the subunit interface close to the decoding center, probably blocks exit of the E-site tRNA. The protein is Small ribosomal subunit protein uS7 of Phytoplasma australiense.